We begin with the raw amino-acid sequence, 458 residues long: Elongation factor 1-alpha (458 aa).

The residue at position 2 (Gly-2) is a N,N,N-trimethylglycine. Lys-3 carries the post-translational modification N6,N6-dimethyllysine; alternate. Residue Lys-3 is modified to N6-methyllysine; alternate. Residues 5 to 240 (KTHVNVVVIG…DAIDPPQRPS (236 aa)) enclose the tr-type G domain. The segment at 14-21 (GHVDSGKS) is G1. 14–21 (GHVDSGKS) serves as a coordination point for GTP. An N6-methyllysine modification is found at Lys-30. The G2 stretch occupies residues 70–74 (GITID). Lys-79 carries the post-translational modification N6,N6,N6-trimethyllysine. Residues 91–94 (DAPG) form a G3 region. GTP contacts are provided by residues 91–95 (DAPGH) and 153–156 (NKMD). The tract at residues 153–156 (NKMD) is G4. The tract at residues 192–194 (SGW) is G5. Lys-316 carries the post-translational modification N6,N6-dimethyllysine; alternate. Residue Lys-316 is modified to N6-methyllysine; alternate. Lys-390 is subject to N6-methyllysine.

It belongs to the TRAFAC class translation factor GTPase superfamily. Classic translation factor GTPase family. EF-Tu/EF-1A subfamily.

It localises to the cytoplasm. This protein promotes the GTP-dependent binding of aminoacyl-tRNA to the A-site of ribosomes during protein biosynthesis. The sequence is that of Elongation factor 1-alpha (TEF-1) from Absidia glauca (Pin mould).